Reading from the N-terminus, the 410-residue chain is NIPA-like protein 3 (410 aa).

Residues 1-24 (MDGAHSAGLQLQPLPPTSGATSTS) form a disordered region. 9 helical membrane passes run 37–57 (NLIG…ALNL), 80–100 (WWLG…SYAF), 105–125 (LIVP…IIFI), 139–159 (VLSF…VTFA), 175–195 (LVSW…CLLL), 206–226 (IVVI…TVKA), 244–264 (PIFY…ATFL), 275–295 (LIAS…GAIF), and 304–324 (ALHI…VFLI). Ser376 carries the post-translational modification Phosphoserine. Residues 389–410 (EEHSSRSTPGVPYRVLEHTKKE) are disordered.

The protein belongs to the NIPA family.

Its subcellular location is the membrane. This is NIPA-like protein 3 (Nipal3) from Mus musculus (Mouse).